Here is a 623-residue protein sequence, read N- to C-terminus: Probable methyltransferase PMT8 (623 aa).

Residues Met-1 to Arg-13 are Cytoplasmic-facing. A helical; Signal-anchor for type II membrane protein transmembrane segment spans residues Leu-14–Ser-34. Residues Ser-35–Glu-623 lie on the Lumenal side of the membrane. N-linked (GlcNAc...) asparagine glycans are attached at residues Asn-204, Asn-350, and Asn-588.

The protein belongs to the methyltransferase superfamily.

It is found in the golgi apparatus membrane. The sequence is that of Probable methyltransferase PMT8 from Arabidopsis thaliana (Mouse-ear cress).